The chain runs to 36 residues: Photosystem I reaction center subunit VIII (36 aa).

The helical transmembrane segment at 6–28 (LPSIFVPLVGLMFPAIAMASLSL) threads the bilayer.

This sequence belongs to the PsaI family.

It is found in the plastid. It localises to the chloroplast thylakoid membrane. Functionally, may help in the organization of the PsaL subunit. This Calycanthus floridus var. glaucus (Eastern sweetshrub) protein is Photosystem I reaction center subunit VIII.